The primary structure comprises 38 residues: Large ribosomal subunit protein bL36 (38 aa).

It belongs to the bacterial ribosomal protein bL36 family.

The chain is Large ribosomal subunit protein bL36 from Saccharophagus degradans (strain 2-40 / ATCC 43961 / DSM 17024).